An 894-amino-acid chain; its full sequence is CWF19-like protein 2 (894 aa).

The disordered stretch occupies residues 1–147 (MATSMAAASG…DEKSGKDDTQ (147 aa)). The segment covering 13–56 (ESAKSIEERKEQTRNARAEVLRQAKANFEKEERRKELKRLRGED) has biased composition (basic and acidic residues). The stretch at 13–107 (ESAKSIEERK…KKQKYEKNNE (95 aa)) forms a coiled coil. Position 75 is a phosphoserine (serine 75). The segment covering 76-99 (VKKKKKKDKHSKKAKKEKKKKSKK) has biased composition (basic residues). The segment covering 128 to 147 (PDKEKAWKVKDEKSGKDDTQ) has biased composition (basic and acidic residues). The stretch at 166–281 (SSSSLKAEKE…AEKAASTKED (116 aa)) forms a coiled coil. A Glycyl lysine isopeptide (Lys-Gly) (interchain with G-Cter in SUMO2) cross-link involves residue lysine 171. Basic and acidic residues predominate over residues 270-284 (EDAEKAASTKEDYRR). Positions 270–483 (EDAEKAASTK…STFAGSPERE (214 aa)) are disordered. Positions 320-330 (TTDTAKNSNNE) are enriched in polar residues. A compositionally biased stretch (basic and acidic residues) spans 332 to 352 (FIGDEKDKRPGSLETCRRESN). Residues serine 360 and serine 372 each carry the phosphoserine modification. 2 stretches are compositionally biased toward basic and acidic residues: residues 410–430 (KNSE…DKKH) and 440–473 (TDEH…RDTK). Residues serine 479 and serine 484 each carry the phosphoserine modification. Residues 502–530 (KAEMMGNMELAEQLKVQLEKANKFKETIT) are a coiled coil. The disordered stretch occupies residues 561 to 583 (NTPGKSLESQGGRRKRQMVSTHE). Lysine 604 participates in a covalent cross-link: Glycyl lysine isopeptide (Lys-Gly) (interchain with G-Cter in SUMO2). Residues 644 to 675 (AAERERLGEEEENQRKKAIAEHRSLAAQMEKC) adopt a coiled-coil conformation.

It belongs to the CWF19 family.

This chain is CWF19-like protein 2 (CWF19L2), found in Homo sapiens (Human).